The primary structure comprises 431 residues: Levansucrase Lscbeta (431 aa).

Positions 61, 62, 148, 218, and 219 each coordinate sucrose. Asp62 serves as the catalytic Nucleophile. The active-site Proton donor/acceptor is the Glu303.

It belongs to the glycosyl hydrolase 68 family. In terms of assembly, homodimer.

It catalyses the reaction [6)-beta-D-fructofuranosyl-(2-&gt;](n) alpha-D-glucopyranoside + sucrose = [6)-beta-D-fructofuranosyl-(2-&gt;](n+1) alpha-D-glucopyranoside + D-glucose. Its activity is regulated as follows. Sucrose hydrolase activity is negatively affected by salt concentration. The levan polymerization rate is constant regardless of sucrose concentration. Catalyzes the synthesis of levan, a fructose polymer, by transferring the fructosyl moiety from sucrose to a growing acceptor molecule. Also displays sucrose hydrolase activity. This chain is Levansucrase Lscbeta, found in Pseudomonas syringae pv. actinidiae.